The primary structure comprises 581 residues: Aspartate--tRNA ligase (581 aa).

L-aspartate is bound at residue E170. Positions 194-197 are aspartate; that stretch reads QLFK. Residue R216 coordinates L-aspartate. ATP contacts are provided by residues 216–218 and Q225; that span reads RDE. H440 provides a ligand contact to L-aspartate. Residue E469 participates in ATP binding. An L-aspartate-binding site is contributed by R476. 521-524 is a binding site for ATP; it reads GFDR.

The protein belongs to the class-II aminoacyl-tRNA synthetase family. Type 1 subfamily. As to quaternary structure, homodimer.

It localises to the cytoplasm. It carries out the reaction tRNA(Asp) + L-aspartate + ATP = L-aspartyl-tRNA(Asp) + AMP + diphosphate. In terms of biological role, catalyzes the attachment of L-aspartate to tRNA(Asp) in a two-step reaction: L-aspartate is first activated by ATP to form Asp-AMP and then transferred to the acceptor end of tRNA(Asp). This is Aspartate--tRNA ligase from Thermosipho africanus (strain TCF52B).